The chain runs to 761 residues: Phosphoribosylformylglycinamidine synthase subunit PurL (761 aa).

His-49 is a catalytic residue. ATP is bound by residues Tyr-52 and Lys-92. Glu-94 contacts Mg(2+). Substrate contacts are provided by residues 95 to 98 (SHNH) and Arg-117. His-96 (proton acceptor) is an active-site residue. Residue Asp-118 participates in Mg(2+) binding. Residue Gln-241 coordinates substrate. Asp-269 serves as a coordination point for Mg(2+). Residue 318–320 (ESQ) participates in substrate binding. Positions 502 and 539 each coordinate ATP. A Mg(2+)-binding site is contributed by Asn-540. A substrate-binding site is contributed by Ser-542.

It belongs to the FGAMS family. As to quaternary structure, monomer. Part of the FGAM synthase complex composed of 1 PurL, 1 PurQ and 2 PurS subunits.

The protein localises to the cytoplasm. It catalyses the reaction N(2)-formyl-N(1)-(5-phospho-beta-D-ribosyl)glycinamide + L-glutamine + ATP + H2O = 2-formamido-N(1)-(5-O-phospho-beta-D-ribosyl)acetamidine + L-glutamate + ADP + phosphate + H(+). Its pathway is purine metabolism; IMP biosynthesis via de novo pathway; 5-amino-1-(5-phospho-D-ribosyl)imidazole from N(2)-formyl-N(1)-(5-phospho-D-ribosyl)glycinamide: step 1/2. Part of the phosphoribosylformylglycinamidine synthase complex involved in the purines biosynthetic pathway. Catalyzes the ATP-dependent conversion of formylglycinamide ribonucleotide (FGAR) and glutamine to yield formylglycinamidine ribonucleotide (FGAM) and glutamate. The FGAM synthase complex is composed of three subunits. PurQ produces an ammonia molecule by converting glutamine to glutamate. PurL transfers the ammonia molecule to FGAR to form FGAM in an ATP-dependent manner. PurS interacts with PurQ and PurL and is thought to assist in the transfer of the ammonia molecule from PurQ to PurL. This Chlorobium chlorochromatii (strain CaD3) protein is Phosphoribosylformylglycinamidine synthase subunit PurL.